Here is a 318-residue protein sequence, read N- to C-terminus: DNA repair nuclease/redox regulator APEX1 (318 aa).

A necessary for interaction with YBX1, binding to RNA, association together with NPM1 to rRNA, endoribonuclease activity on abasic RNA and localization in the nucleoli region spans residues 1–33; that stretch reads MPKRGKKGAVAEDGDELKTEPEAKKSKTTAKKN. The segment at 1–60 is disordered; sequence MPKRGKKGAVAEDGDELKTEPEAKKSKTTAKKNDKEAAGEGPALYEDPPDQKTSPSGKPA. Residues lysine 6 and lysine 7 each carry the N6-acetyllysine; by EP300 modification. The short motif at 8–13 is the Nuclear localization signal (NLS) element; sequence GAVAED. Basic and acidic residues predominate over residues 16–38; the sequence is ELKTEPEAKKSKTTAKKNDKEAA. The interval 23–33 is necessary for interaction with NPM1 and for efficient rRNA binding; sequence AKKSKTTAKKN. 4 positions are modified to N6-acetyllysine: lysine 27, lysine 31, lysine 32, and lysine 35. Serine 54 carries the post-translational modification Phosphoserine. The Nuclear export signal (NES) motif lies at 64–80; it reads ICSWNVDGLRAWIKKKG. An S-nitrosocysteine; alternate modification is found at cysteine 65. Cysteine 65 and cysteine 93 form a disulfide bridge. Aspartate 70 provides a ligand contact to Mg(2+). Cysteine 93 is subject to S-nitrosocysteine; alternate. Position 96 (glutamate 96) interacts with Mg(2+). Tyrosine 171 is an active-site residue. N6-acetyllysine is present on lysine 197. 2 residues coordinate Mg(2+): aspartate 210 and asparagine 212. Aspartate 210 (proton donor/acceptor) is an active-site residue. Position 233 is a phosphothreonine; by CDK5 (threonine 233). Residues 289–318 are mitochondrial targeting sequence (MTS); that stretch reads HSLLTALCDSKIRSKALGSDHCPITLYLAL. Aspartate 308 is a binding site for Mg(2+). S-nitrosocysteine is present on cysteine 310.

It belongs to the DNA repair enzymes AP/ExoA family. In terms of assembly, monomer. Homodimer; disulfide-linked. Component of the SET complex, composed of at least APEX1, SET, ANP32A, HMGB2, NME1 and TREX1. Associates with the dimer XRCC5/XRCC6 in a DNA-dependent manner. Interacts with SIRT1; the interaction is increased in the context of genotoxic stress. Interacts with HDAC1, HDAC2 and HDAC3; the interactions are not dependent on the APEX1 acetylation status. Interacts with XRCC1; the interaction is induced by SIRT1 and increased with the APEX1 acetylated form. Interacts with NPM1 (via N-terminal domain); the interaction is RNA-dependent and decreases in hydrogen peroxide-damaged cells. Interacts (via N-terminus) with YBX1 (via C-terminus); the interaction is increased in presence of APEX1 acetylated at Lys-6 and Lys-7. Interacts with HNRNPL; the interaction is DNA-dependent. Interacts (via N-terminus) with KPNA1 and KPNA2. Interacts with TXN; the interaction stimulates the FOS/JUN AP-1 complex DNA-binding activity in a redox-dependent manner. Interacts with GZMA, KRT8, MDM2, POLB, PRDX6, PRPF19, RPLP0, TOMM20 and WDR77. Binds to CDK5. The cofactor is Mg(2+). Mn(2+) serves as cofactor. Post-translationally, phosphorylated. Phosphorylation by kinase PKC or casein kinase CK2 results in enhanced redox activity that stimulates binding of the FOS/JUN AP-1 complex to its cognate binding site. AP-endodeoxyribonuclease activity is not affected by CK2-mediated phosphorylation. Phosphorylation of Thr-233 by CDK5 in response to MPP(+)/MPTP (1-methyl-4-phenylpyridinium) reduces AP-endodeoxyribonuclease activity resulting in accumulation of DNA damage and contributing to neuronal death. In terms of processing, acetylated on Lys-6 and Lys-7. Acetylation is increased by the transcriptional coactivator EP300 acetyltransferase, genotoxic agents like H(2)O(2) and methyl methanesulfonate (MMS). Acetylation increases its binding affinity to the negative calcium response element (nCaRE) DNA promoter. The acetylated form induces a stronger binding of YBX1 to the Y-box sequence in the MDR1 promoter than the unacetylated form. Deacetylated on lysines. Lys-6 and Lys-7 are deacetylated by SIRT1. Cleaved at Lys-31 by granzyme A to create the mitochondrial form; leading in reduction of binding to DNA, AP endodeoxyribonuclease activity, redox activation of transcription factors and to enhanced cell death. Cleaved by granzyme K; leading to intracellular ROS accumulation and enhanced cell death after oxidative stress. Post-translationally, cys-69 and Cys-93 are nitrosylated in response to nitric oxide (NO) and lead to the exposure of the nuclear export signal (NES). In terms of processing, ubiquitinated by MDM2; leading to translocation to the cytoplasm and proteasomal degradation.

The protein localises to the nucleus. The protein resides in the nucleolus. It is found in the nucleus speckle. Its subcellular location is the endoplasmic reticulum. It localises to the cytoplasm. The protein localises to the mitochondrion. The enzyme catalyses a deoxyribonucleotide-2'-deoxyribose-5'-monophosphate-DNA + H2O = a 5'-end 2'-deoxyribose-5'-monophosphate-DNA + a 3'-end 2'-deoxyribonucleotide-DNA + H(+). It catalyses the reaction Exonucleolytic cleavage in the 3'- to 5'-direction to yield nucleoside 5'-phosphates.. It carries out the reaction a 3'-end 2'-deoxyribonucleotide-3'-phosphoglycolate-DNA + H2O = 2-phosphoglycolate + a 3'-end 2'-deoxyribonucleotide-DNA + H(+). The catalysed reaction is a 3'-end 2'-deoxyribonucleotide-8-oxoguanine-DNA + H2O = 8-oxo-dGMP + a 3'-end 2'-deoxyribonucleotide-DNA + H(+). Its activity is regulated as follows. NPM1 stimulates endodeoxyribonuclease activity on double-stranded DNA with AP sites, but inhibits endoribonuclease activity on single-stranded RNA containing AP sites. Functionally, multifunctional protein that plays a central role in the cellular response to oxidative stress. The two major activities of APEX1 are DNA repair and redox regulation of transcriptional factors. Functions as an apurinic/apyrimidinic (AP) endodeoxyribonuclease in the base excision repair (BER) pathway of DNA lesions induced by oxidative and alkylating agents. Initiates repair of AP sites in DNA by catalyzing hydrolytic incision of the phosphodiester backbone immediately adjacent to the damage, generating a single-strand break with 5'-deoxyribose phosphate and 3'-hydroxyl ends. Also incises at AP sites in the DNA strand of DNA/RNA hybrids, single-stranded DNA regions of R-loop structures, and single-stranded RNA molecules. Operates at switch sites of immunoglobulin (Ig) constant regions where it mediates Ig isotype class switch recombination. Processes AP sites induced by successive action of AICDA and UNG. Generates staggered nicks in opposite DNA strands resulting in the formation of double-strand DNA breaks that are finally resolved via non-homologous end joining repair pathway. Has 3'-5' exodeoxyribonuclease activity on mismatched deoxyribonucleotides at the 3' termini of nicked or gapped DNA molecules during short-patch BER. Possesses DNA 3' phosphodiesterase activity capable of removing lesions (such as phosphoglycolate and 8-oxoguanine) blocking the 3' side of DNA strand breaks. Also acts as an endoribonuclease involved in the control of single-stranded RNA metabolism. Plays a role in regulating MYC mRNA turnover by preferentially cleaving in between UA and CA dinucleotides of the MYC coding region determinant (CRD). In association with NMD1, plays a role in the rRNA quality control process during cell cycle progression. Acts as a loading factor for POLB onto non-incised AP sites in DNA and stimulates the 5'-terminal deoxyribose 5'-phosphate (dRp) excision activity of POLB. Exerts reversible nuclear redox activity to regulate DNA binding affinity and transcriptional activity of transcriptional factors by controlling the redox status of their DNA-binding domain, such as the FOS/JUN AP-1 complex after exposure to IR. Involved in calcium-dependent down-regulation of parathyroid hormone (PTH) expression by binding to negative calcium response elements (nCaREs). Together with HNRNPL or the dimer XRCC5/XRCC6, associates with nCaRE, acting as an activator of transcriptional repression. May also play a role in the epigenetic regulation of gene expression by participating in DNA demethylation. Stimulates the YBX1-mediated MDR1 promoter activity, when acetylated at Lys-6 and Lys-7, leading to drug resistance. Plays a role in protection from granzyme-mediated cellular repair leading to cell death. Binds DNA and RNA. Associates, together with YBX1, on the MDR1 promoter. Together with NPM1, associates with rRNA. The chain is DNA repair nuclease/redox regulator APEX1 (APEX1) from Pongo pygmaeus (Bornean orangutan).